The primary structure comprises 269 residues: MPGIETIKSSWADEVELDYGGLPPTTETIENGHKYVTEYKYNKDDKKTKVVRTYKITKQVVPKTVAKRRTWAKFGESKNDKPGPNSQTTMVSEDIIMQFINSKEDEKANDPLLDPSKNIAKCRICNGEHWSVNCPYKGTAMDTNLMEKKAAAAASAAVDAPKSGKYVPPFLKDSQKGGMGIRGRDDTAAIRISNLSESMTEADLEELVKKIGPQSKMYLARDKNTGLCKGFAYVHFKQRKDAAAAIEILNGHGYDHLILSVEWSKPQNT.

Positions 188–266 constitute an RRM domain; that stretch reads AAIRISNLSE…LILSVEWSKP (79 aa).

It belongs to the eIF-3 subunit G family. In terms of assembly, component of the eukaryotic translation initiation factor 3 (eIF-3) complex. The eIF-3 complex interacts with pix.

The protein resides in the cytoplasm. Its function is as follows. RNA-binding component of the eukaryotic translation initiation factor 3 (eIF-3) complex, which is involved in protein synthesis of a specialized repertoire of mRNAs and, together with other initiation factors, stimulates binding of mRNA and methionyl-tRNAi to the 40S ribosome. The eIF-3 complex specifically targets and initiates translation of a subset of mRNAs involved in cell proliferation. This subunit can bind 18S rRNA. In Drosophila grimshawi (Hawaiian fruit fly), this protein is Eukaryotic translation initiation factor 3 subunit G-1.